The primary structure comprises 294 residues: Proline iminopeptidase (294 aa).

In terms of domain architecture, AB hydrolase-1 spans 27-277 (PPLVLLHGGP…GCGHMSFVEK (251 aa)). The Nucleophile role is filled by S105. Residue D244 is part of the active site. Catalysis depends on H271, which acts as the Proton donor.

Belongs to the peptidase S33 family.

It is found in the cell envelope. The enzyme catalyses Release of N-terminal proline from a peptide.. Functionally, releases the N-terminal proline from various substrates. This chain is Proline iminopeptidase, found in Lactobacillus helveticus (strain DPC 4571).